The following is a 211-amino-acid chain: Holliday junction resolvase RecU (211 aa).

Positions 95, 97, 110, and 129 each coordinate Mg(2+).

It belongs to the RecU family. Mg(2+) serves as cofactor.

The protein resides in the cytoplasm. The enzyme catalyses Endonucleolytic cleavage at a junction such as a reciprocal single-stranded crossover between two homologous DNA duplexes (Holliday junction).. Functionally, endonuclease that resolves Holliday junction intermediates in genetic recombination. Cleaves mobile four-strand junctions by introducing symmetrical nicks in paired strands. Promotes annealing of linear ssDNA with homologous dsDNA. Required for DNA repair, homologous recombination and chromosome segregation. The polypeptide is Holliday junction resolvase RecU (Lactobacillus acidophilus (strain ATCC 700396 / NCK56 / N2 / NCFM)).